Here is an 85-residue protein sequence, read N- to C-terminus: Large ribosomal subunit protein bL27 (85 aa).

The disordered stretch occupies residues 1–21 (MAHKKGLGSTKNGRDSQAKRL).

The protein belongs to the bacterial ribosomal protein bL27 family.

The chain is Large ribosomal subunit protein bL27 from Thermus thermophilus (strain ATCC BAA-163 / DSM 7039 / HB27).